A 469-amino-acid polypeptide reads, in one-letter code: Zinc finger CCCH domain-containing protein 30 (469 aa).

The segment at 415-443 adopts a C3H1-type zinc-finger fold; that stretch reads VRPMKPCAYFNSPKGCRNGASCTFLHDAS. Residues 444-469 form a disordered region; it reads APTRKDHQKQKGSKRIKLDNTMGGRN. The span at 449 to 458 shows a compositional bias: basic residues; it reads DHQKQKGSKR.

In Oryza sativa subsp. japonica (Rice), this protein is Zinc finger CCCH domain-containing protein 30.